The chain runs to 77 residues: MASKAEKIVAGLGGIDNIDEIEGCITRLRTEVNDPALVNEAALKAAGAHGVVKMGTAIQVVIGTDADPIAAEIEDMM.

A PTS EIIB type-1 domain is found at 2–77; sequence ASKAEKIVAG…PIAAEIEDMM (76 aa). Catalysis depends on cysteine 24, which acts as the Phosphocysteine intermediate; for EIIB activity.

The catalysed reaction is N(pros)-phospho-L-histidyl-[protein] + N-acetyl-D-glucosamine(out) = N-acetyl-D-glucosamine 6-phosphate(in) + L-histidyl-[protein]. Its function is as follows. The phosphoenolpyruvate-dependent sugar phosphotransferase system (sugar PTS), a major carbohydrate active transport system, catalyzes the phosphorylation of incoming sugar substrates concomitantly with their translocation across the cell membrane. This system is involved in N-acetylglucosamine (GlcNAc) transport. The polypeptide is PTS system N-acetylglucosamine-specific EIIB component (Streptomyces coelicolor (strain ATCC BAA-471 / A3(2) / M145)).